Reading from the N-terminus, the 454-residue chain is tRNA modification GTPase MnmE (454 aa).

Residues R23, E80, and K120 each coordinate (6S)-5-formyl-5,6,7,8-tetrahydrofolate. The TrmE-type G domain maps to 216–377 (GMKVVIAGRP…LRDHLKQSMG (162 aa)). Residue N226 participates in K(+) binding. GTP is bound by residues 226–231 (NAGKSS), 245–251 (TDIAGTT), 270–273 (DTAG), 335–338 (NKAD), and 358–360 (SAR). S230 contributes to the Mg(2+) binding site. T245, I247, and T250 together coordinate K(+). Mg(2+) is bound at residue T251. K454 contributes to the (6S)-5-formyl-5,6,7,8-tetrahydrofolate binding site.

It belongs to the TRAFAC class TrmE-Era-EngA-EngB-Septin-like GTPase superfamily. TrmE GTPase family. Homodimer. Heterotetramer of two MnmE and two MnmG subunits. The cofactor is K(+).

It is found in the cytoplasm. In terms of biological role, exhibits a very high intrinsic GTPase hydrolysis rate. Involved in the addition of a carboxymethylaminomethyl (cmnm) group at the wobble position (U34) of certain tRNAs, forming tRNA-cmnm(5)s(2)U34. This Yersinia pseudotuberculosis serotype O:1b (strain IP 31758) protein is tRNA modification GTPase MnmE.